A 423-amino-acid polypeptide reads, in one-letter code: Histidinol dehydrogenase (423 aa).

3 residues coordinate NAD(+): Tyr116, Gln177, and Asn200. Positions 223, 245, and 248 each coordinate substrate. Zn(2+) contacts are provided by Gln245 and His248. Catalysis depends on proton acceptor residues Glu313 and His314. 4 residues coordinate substrate: His314, Asp347, Glu401, and His406. Asp347 contacts Zn(2+). His406 lines the Zn(2+) pocket.

Belongs to the histidinol dehydrogenase family. It depends on Zn(2+) as a cofactor.

The catalysed reaction is L-histidinol + 2 NAD(+) + H2O = L-histidine + 2 NADH + 3 H(+). It participates in amino-acid biosynthesis; L-histidine biosynthesis; L-histidine from 5-phospho-alpha-D-ribose 1-diphosphate: step 9/9. In terms of biological role, catalyzes the sequential NAD-dependent oxidations of L-histidinol to L-histidinaldehyde and then to L-histidine. This Staphylococcus saprophyticus subsp. saprophyticus (strain ATCC 15305 / DSM 20229 / NCIMB 8711 / NCTC 7292 / S-41) protein is Histidinol dehydrogenase.